A 35-amino-acid polypeptide reads, in one-letter code: uncharacterized protein (35 aa).

The first 18 residues, 1–18 (MRSLVFVQLSLLSWEIFC), serve as a signal peptide directing secretion.

This is an uncharacterized protein from Saccharomyces cerevisiae (strain ATCC 204508 / S288c) (Baker's yeast).